Here is an 827-residue protein sequence, read N- to C-terminus: MTKLKDQTRAILLATLMVTSVFAGAIAFTGSAAAERGNLDADSESFNKTIQSGDRVFLGEEISTDAGLGASNPLLTGTAGNSEGVSLDLSSPIPQTTENQPLGTYDVDGSGSATTPNVTLLAPRITDSEILTSSGGDVTGSAISSSDAGNLYVNADYNYESAEKVEVTVEDPSGTDITNEVLSGTDTFVDDGSIGSTSSTGGGVGIDMSDQDAGEYTIILEGAEDLDFGDATETMTLTISSQDEIGIELDSESVTQGTDVQYTVTNGIDGNEHVVAMDLSDLQNDATTEQAKEVFRNIGDTSEVGIANSSATNTSGSSTGPTVETADIAYAVVEIDGASAVGGIETQYLDDSEVDLEVYDAGVSATAAVGQDATNDITLTIEEGGTTLSSPTGQYVVGSEVDINGTATSSDSVAIYVRDDGDWQLLEIGGDNEISVDSDDTFEEEDIALSGLSGDGSSILSLTGTYRIGVIDASDADVGGDGSVDDSLTTSEFTSGVSSSNSIRVTDQALTGQFTTINGQVAPVETGTVDINGTASGANSVLVIFVDERGNVNYQEVSVDSDGTYDEDDITVGLTQGRVTAHILSVGRDSAIGDGSLPSGPSNGATLNDLTGYLDTLDQNNNNGEQINELIASETVDETASDDLIVTETFRLAESSTSIDSIYPDAAEAAGINPVATGETMVIAGSTNLKPDDNTISIEVTNEDGTSVALEDTDEWNNDGQWMVEIDTTDFETGTFTVEADDGDNTDTVNVEVVSEREDTTTSSDNATDTTTTTDGPTETTTTAEPTETTEEPTEETTTSSNTPGFGIAVALVALVGAALLALRREN.

A signal peptide spans 1–34 (MTKLKDQTRAILLATLMVTSVFAGAIAFTGSAAA). N47 carries an N-linked (Glc...) asparagine glycan. Polar residues predominate over residues 73 to 102 (PLLTGTAGNSEGVSLDLSSPIPQTTENQPL). The disordered stretch occupies residues 73–111 (PLLTGTAGNSEGVSLDLSSPIPQTTENQPLGTYDVDGSG). Residues N117, N308, N313, N532, and N766 are each glycosylated (N-linked (Glc...) asparagine). The segment at 755-804 (SEREDTTTSSDNATDTTTTTDGPTETTTTAEPTETTEEPTEETTTSSNTP) is disordered. Positions 761-787 (TTSSDNATDTTTTTDGPTETTTTAEPT) are enriched in low complexity. Residues 804 to 806 (PGF) carry the PGF sorting signal motif. A helical membrane pass occupies residues 804–823 (PGFGIAVALVALVGAALLAL).

This sequence belongs to the halobacterial S-layer protein family. In terms of processing, O-glycosylated on 4 to 6 threonine residues; glycans consist of Glc-Gal disaccharides. The N-terminus is not blocked. Post-translationally, cleaved by the archaeosortase ArtA at the C-terminus, with removal of a short hydrophobic segment. In terms of processing, lipidation: Following protein translocation across the membrane, the protein is modified by a derivative of mevalonic acid. Lipid modification is ArtA-dependent and requires the conserved C-terminal PGF motif. Asn-47 and Asn-117 are glycosylated by a pentasaccharide comprising a hexose, 2 hexuronic acids, a methyl ester of a hexuronic acid and mannose. The pentasaccharide is produced in 2 steps: first, a tetrasaccharide is built on dolichol-P and then transferred to the S-layer glycoprotein. Then, the mannose fifth sugar is attached to a distinct molecule of dolichol-P and is transferred to the protein already carrying the tetrasaccharide. The pentasaccharide on Asn-47 was initially thought to contain mannose, galactose, glucose and idose with a relative ratio of 1/3/3/0.2. However, it was later shown that it is not the case. Under low-salt conditions (1.75 M instead of 3.4 M), a tetrasaccharide consisting of a sulfated hexose, 2 hexoses and rhamnose is attached to Asn-532.

It localises to the secreted. The protein localises to the cell wall. The protein resides in the S-layer. It is found in the cell membrane. Its function is as follows. S-layer protein. The S-layer is a paracrystalline mono-layered assembly of proteins which coat the surface of the cell. The protein is Cell surface glycoprotein (csg) of Haloferax volcanii (strain ATCC 29605 / DSM 3757 / JCM 8879 / NBRC 14742 / NCIMB 2012 / VKM B-1768 / DS2) (Halobacterium volcanii).